The following is a 203-amino-acid chain: MSSPLECAKYLLSAHTTHQLPADDGSEVAFAGRSNAGKSSVLNTLTRQNALARVSKTPGRTQQLVYFTVTPQRYLVDLPGYGYAKVPKELQIHWQTFIDSYFHQRQALRGLVVVMDIRHPLKEYDLQMLAYARQRGLPAQALLTKADKLGRGQQAQTLQKVRNELTKHFADHINIQTFSSKSRQGVEQLHTVIETWLGLARLA.

The region spanning 24–199 is the EngB-type G domain; that stretch reads DGSEVAFAGR…HTVIETWLGL (176 aa). GTP contacts are provided by residues 32–39, 59–63, 77–80, 144–147, and 178–180; these read GRSNAGKS, GRTQQ, DLPG, TKAD, and FSS. Mg(2+) is bound by residues S39 and T61.

The protein belongs to the TRAFAC class TrmE-Era-EngA-EngB-Septin-like GTPase superfamily. EngB GTPase family. The cofactor is Mg(2+).

Functionally, necessary for normal cell division and for the maintenance of normal septation. This Xylella fastidiosa (strain 9a5c) protein is Probable GTP-binding protein EngB.